Consider the following 97-residue polypeptide: Large ribosomal subunit protein uL23 (97 aa).

The protein belongs to the universal ribosomal protein uL23 family. As to quaternary structure, part of the 50S ribosomal subunit. Contacts protein L29, and trigger factor when it is bound to the ribosome.

Its function is as follows. One of the early assembly proteins it binds 23S rRNA. One of the proteins that surrounds the polypeptide exit tunnel on the outside of the ribosome. Forms the main docking site for trigger factor binding to the ribosome. The sequence is that of Large ribosomal subunit protein uL23 from Clostridium botulinum (strain ATCC 19397 / Type A).